The sequence spans 407 residues: Aurora kinase (407 aa).

2 disordered regions span residues 1-43 (MTPT…STSS) and 66-137 (ERQG…TQSK). Composition is skewed to low complexity over residues 31-43 (SAST…STSS) and 126-136 (STTTTMTSTQS). Residues 147–399 (FDIGRPLGKG…LEGVIAHAWI (253 aa)) form the Protein kinase domain. Residues Lys157, Lys176, and 224 to 227 (LEYA) each bind ATP. The active-site Proton acceptor is Asp272. Asp290 is a binding site for ATP.

Belongs to the protein kinase superfamily. Ser/Thr protein kinase family.

It is found in the cytoplasm. It localises to the cytoskeleton. The protein resides in the spindle. The protein localises to the midbody. Its subcellular location is the microtubule organizing center. It is found in the centrosome. It localises to the nucleus. The protein resides in the chromosome. The protein localises to the centromere. It catalyses the reaction L-seryl-[protein] + ATP = O-phospho-L-seryl-[protein] + ADP + H(+). The catalysed reaction is L-threonyl-[protein] + ATP = O-phospho-L-threonyl-[protein] + ADP + H(+). Its activity is regulated as follows. Cdc2 activity is required for activation. Its function is as follows. Serine/threonine protein kinase that contributes to the regulation of cell cycle progression. Involved in meiotic apparatus formation and polar body extrusion. Contributes to Plk1 activation and phosphorylation of histone H3 at 'Ser-10' during meiosis I. Required for accurate progression of early embryonic M phase. Involved in chromosome alignment and cleavage furrow formation during early embryonic cycles. May be involved in mitotic spindle formation and cytokinesis. This Patiria pectinifera (Starfish) protein is Aurora kinase.